Consider the following 291-residue polypeptide: Phosphoribosylaminoimidazole-succinocarboxamide synthase (291 aa).

Belongs to the SAICAR synthetase family.

It catalyses the reaction 5-amino-1-(5-phospho-D-ribosyl)imidazole-4-carboxylate + L-aspartate + ATP = (2S)-2-[5-amino-1-(5-phospho-beta-D-ribosyl)imidazole-4-carboxamido]succinate + ADP + phosphate + 2 H(+). The protein operates within purine metabolism; IMP biosynthesis via de novo pathway; 5-amino-1-(5-phospho-D-ribosyl)imidazole-4-carboxamide from 5-amino-1-(5-phospho-D-ribosyl)imidazole-4-carboxylate: step 1/2. In Candida albicans (Yeast), this protein is Phosphoribosylaminoimidazole-succinocarboxamide synthase (ADE1).